Consider the following 503-residue polypeptide: Glutamate--tRNA ligase (503 aa).

Residues 26 to 36 (PSPTGTPHVGL) carry the 'HIGH' region motif. Positions 126 to 148 (TPEEVEARHRAAGRDPKLGYDNA) are disordered. A compositionally biased stretch (basic and acidic residues) spans 130–148 (VEARHRAAGRDPKLGYDNA). The short motif at 270–274 (KLSKR) is the 'KMSKS' region element. Residue Lys273 coordinates ATP.

The protein belongs to the class-I aminoacyl-tRNA synthetase family. Glutamate--tRNA ligase type 1 subfamily. In terms of assembly, monomer.

Its subcellular location is the cytoplasm. It catalyses the reaction tRNA(Glu) + L-glutamate + ATP = L-glutamyl-tRNA(Glu) + AMP + diphosphate. Functionally, catalyzes the attachment of glutamate to tRNA(Glu) in a two-step reaction: glutamate is first activated by ATP to form Glu-AMP and then transferred to the acceptor end of tRNA(Glu). In Saccharopolyspora erythraea (strain ATCC 11635 / DSM 40517 / JCM 4748 / NBRC 13426 / NCIMB 8594 / NRRL 2338), this protein is Glutamate--tRNA ligase.